Here is a 141-residue protein sequence, read N- to C-terminus: Nucleoside diphosphate kinase (141 aa).

Residues Lys11, Phe59, Arg87, Thr93, Arg104, and Asn114 each contribute to the ATP site. The active-site Pros-phosphohistidine intermediate is His117.

Belongs to the NDK family. As to quaternary structure, homotetramer. Requires Mg(2+) as cofactor.

It localises to the cytoplasm. The catalysed reaction is a 2'-deoxyribonucleoside 5'-diphosphate + ATP = a 2'-deoxyribonucleoside 5'-triphosphate + ADP. The enzyme catalyses a ribonucleoside 5'-diphosphate + ATP = a ribonucleoside 5'-triphosphate + ADP. Major role in the synthesis of nucleoside triphosphates other than ATP. The ATP gamma phosphate is transferred to the NDP beta phosphate via a ping-pong mechanism, using a phosphorylated active-site intermediate. This Bdellovibrio bacteriovorus (strain ATCC 15356 / DSM 50701 / NCIMB 9529 / HD100) protein is Nucleoside diphosphate kinase.